The following is a 462-amino-acid chain: Asparagine--tRNA ligase (462 aa).

This sequence belongs to the class-II aminoacyl-tRNA synthetase family. Homodimer.

The protein resides in the cytoplasm. The enzyme catalyses tRNA(Asn) + L-asparagine + ATP = L-asparaginyl-tRNA(Asn) + AMP + diphosphate + H(+). The protein is Asparagine--tRNA ligase of Thermosynechococcus vestitus (strain NIES-2133 / IAM M-273 / BP-1).